The sequence spans 200 residues: Protein GrpE (200 aa).

It belongs to the GrpE family. Homodimer.

The protein localises to the cytoplasm. Participates actively in the response to hyperosmotic and heat shock by preventing the aggregation of stress-denatured proteins, in association with DnaK and GrpE. It is the nucleotide exchange factor for DnaK and may function as a thermosensor. Unfolded proteins bind initially to DnaJ; upon interaction with the DnaJ-bound protein, DnaK hydrolyzes its bound ATP, resulting in the formation of a stable complex. GrpE releases ADP from DnaK; ATP binding to DnaK triggers the release of the substrate protein, thus completing the reaction cycle. Several rounds of ATP-dependent interactions between DnaJ, DnaK and GrpE are required for fully efficient folding. The chain is Protein GrpE from Mycoplasma mycoides subsp. mycoides SC (strain CCUG 32753 / NCTC 10114 / PG1).